The primary structure comprises 93 residues: YcgL domain-containing protein Shal_1837 (93 aa).

In terms of domain architecture, YcgL spans methionine 1–lysine 85.

The chain is YcgL domain-containing protein Shal_1837 from Shewanella halifaxensis (strain HAW-EB4).